The sequence spans 307 residues: UDP-N-acetylenolpyruvoylglucosamine reductase (307 aa).

In terms of domain architecture, FAD-binding PCMH-type spans 33-197 (TGGNADFYIT…LEAAFTLAPG (165 aa)). Residue R176 is part of the active site. S226 acts as the Proton donor in catalysis. E296 is an active-site residue.

This sequence belongs to the MurB family. The cofactor is FAD.

Its subcellular location is the cytoplasm. It carries out the reaction UDP-N-acetyl-alpha-D-muramate + NADP(+) = UDP-N-acetyl-3-O-(1-carboxyvinyl)-alpha-D-glucosamine + NADPH + H(+). The protein operates within cell wall biogenesis; peptidoglycan biosynthesis. Cell wall formation. In Staphylococcus aureus (strain MRSA252), this protein is UDP-N-acetylenolpyruvoylglucosamine reductase.